Here is a 381-residue protein sequence, read N- to C-terminus: Metallophosphoesterase 1 (381 aa).

Residues 15 to 35 (LIFAFVSVFVFCEYVIYYLVI) traverse the membrane as a helical segment. 6 residues coordinate a divalent metal cation: Asp59, Asp101, Asn139, His234, His288, and His290. The chain crosses the membrane as a helical span at residues 341 to 361 (TVLVVYCSSCLIIALITLIHL). A Di-lysine motif motif is present at residues 377–381 (KHKTL).

It belongs to the metallophosphoesterase superfamily. MPPE1 family. It depends on Mn(2+) as a cofactor.

It localises to the endoplasmic reticulum-Golgi intermediate compartment membrane. Its function is as follows. Metallophosphoesterase that catalyzes the removal of a side-chain ethanolamine-phosphate (EtNP) from the second mannose of the GPI-anchor protein intermediate. Participates in the glycan remodeling steps of GPI-anchor maturation to allow an efficient transport of GPI-anchor proteins from the endoplasmic reticulum to the Golgi. The polypeptide is Metallophosphoesterase 1 (Danio rerio (Zebrafish)).